We begin with the raw amino-acid sequence, 769 residues long: MINRQYFIWYIFIFNIINKIYFENIRYVKNYEVVIRKKKNIERGIGNDFAFIRRYYKSRLLSDVSYKNNSIKGKNRVDKEGDIKKYDNNDDNKMDNSYDYKNKSIKENETKIRKEQVISLDKRYNRNINEKEEIKKKIKDIQRKRLIIYFKQDNTILSSRNYKHIFMKVLSSCGHIEKLTFINFYLYEFPKSINNEDMLLKICLRLLESRRINVENDNQISHTVQMKSYNNNNNKWDNINSKNNCIYQIKDKIKDLPNVSPSASTFTSISTSPYTLKLRDRNKYANDKNHIFKINHSNKHKNNNNNNNNNDYHNNNKSNYHSHSSAKCQTQRLNKKMIGTNILDGYDIIQMEEGLNLSHNYELNDVNVCIIDTGIDENHIDLKDNIIEKKTFMKHSYKKYNIDGINNIESDNIDGINNIESDNIDGINNIESDNIDGINNIESDNIDGINNIESDNIDGINNIKSSDNIKSSDNIKSSDNINSSDNIKSSDNNNVHTMLRNKLYLKKKKECSNYNTSNDGHGHGTFIAGIIAGNSPKGKKGIKGISKKAKLIICKALNNNNAGYISDILECFNFCAKKKARIINASFASTTHYPSLFQALKELQDKDILVISSSGNCSSNSKCKQAFQECNLNIQKLYPAAYSADLNNIISVSNIIQQSNGNIVLSPDSCYSPNYVHLAAPGGNIISTFPNNKYAISSGTSFSASVITGLASLVLSINSNLTSQQVIELFKKSIVQTKSLENKVKWGGFINVYDLVRFTIDSLPKDKDE.

Asparagine 68, asparagine 102, asparagine 108, asparagine 295, asparagine 316, and asparagine 356 each carry an N-linked (GlcNAc...) asparagine glycan. Residues 293 to 302 (KINHSNKHKN) are compositionally biased toward basic residues. Positions 293–329 (KINHSNKHKNNNNNNNNNDYHNNNKSNYHSHSSAKCQ) are disordered. Low complexity predominate over residues 303–325 (NNNNNNNNDYHNNNKSNYHSHSS). Residues 345–756 (GYDIIQMEEG…GGFINVYDLV (412 aa)) form the Peptidase S8 domain. Aspartate 372 acts as the Charge relay system in catalysis. Positions 468-493 (NIKSSDNIKSSDNINSSDNIKSSDNN) are disordered. N-linked (GlcNAc...) asparagine glycans are attached at residues asparagine 482 and asparagine 515. The Charge relay system role is filled by histidine 523. N-linked (GlcNAc...) asparagine glycosylation is found at asparagine 584 and asparagine 616. Serine 701 serves as the catalytic Charge relay system. Asparagine 720 carries N-linked (GlcNAc...) asparagine glycosylation.

Belongs to the peptidase S8 family.

The protein resides in the secreted. The catalysed reaction is Hydrolysis of proteins with broad specificity for peptide bonds, and a preference for a large uncharged residue in P1. Hydrolyzes peptide amides.. Its function is as follows. Serine protease which may cleave PFN/profilin. In Plasmodium falciparum (isolate 3D7), this protein is Subtilisin-like protease 3.